A 43-amino-acid chain; its full sequence is uncharacterized protein (43 aa).

Polar residues-rich tracts occupy residues 1–19 (MSQKLSFFQQNTRNGSGAS) and 33–43 (PENSISKTFSK). A disordered region spans residues 1-43 (MSQKLSFFQQNTRNGSGASRTLVIKPPTIQPKPENSISKTFSK).

This is an uncharacterized protein from Dictyostelium discoideum (Social amoeba).